Reading from the N-terminus, the 799-residue chain is 1-phosphatidylinositol 4,5-bisphosphate phosphodiesterase delta-4 (799 aa).

A PH domain is found at 16 to 124; that stretch reads LLMQEGMPMR…WMRGLHLLVD (109 aa). Residues 26–53 form a substrate binding region; the sequence is KVRSKSWKKLRYFRLQNDGMTVWHARQA. 3 EF-hand domains span residues 134-169, 170-205, and 206-237; these read RLDQWLSDWFQRGDKNQDGKMSFQEVQRLLHLMNVE, MDQEYAFSLFQAADTSQSGTLEGEEFVEFYKALTKR, and AEVQELFESFSADGQKLTLLEFSDFLREEQKE. Ca(2+) contacts are provided by Asp-147, Asn-149, Asp-151, Lys-153, Glu-158, Asp-183, Ser-185, Ser-187, Thr-189, and Glu-194. The short motif at 213–243 is the GBA element; that stretch reads ESFSADGQKLTLLEFSDFLREEQKERDCTSE. The PI-PLC X-box domain maps to 290 to 435; that stretch reads QDMTQPLNHY…LRRKILVKGK (146 aa). Residue His-305 is part of the active site. Ca(2+) is bound by residues Asn-306, Glu-335, and Asp-337. The active site involves His-350. Ca(2+) is bound at residue Glu-384. Substrate-binding residues include Lys-433 and Lys-435. Ser-460 carries the post-translational modification Phosphoserine. A PI-PLC Y-box domain is found at 530–646; that stretch reads LSSLVIYLKS…GYVLKPDFLR (117 aa). Substrate is bound by residues Ser-559 and Arg-586. In terms of domain architecture, C2 spans 646–773; the sequence is RDNQSSFHPE…QGYRHIHLLS (128 aa). 6 residues coordinate Ca(2+): Ile-687, Asp-689, Asn-713, Asp-742, Tyr-743, and Asp-744. The PDZ-binding signature appears at 768-771; it reads HIHL.

In terms of assembly, interacts with GRIP1. Interacts (via GBA motif) with guanine nucleotide-binding protein G(i) alpha subunit GNAI3 (inactive GDP-bound form); low-affinity interaction. The cofactor is Ca(2+).

The protein localises to the membrane. It localises to the nucleus. It is found in the cytoplasm. Its subcellular location is the endoplasmic reticulum. It carries out the reaction a 1,2-diacyl-sn-glycero-3-phospho-(1D-myo-inositol-4,5-bisphosphate) + H2O = 1D-myo-inositol 1,4,5-trisphosphate + a 1,2-diacyl-sn-glycerol + H(+). The enzyme catalyses a 1,2-diacyl-sn-glycero-3-phospho-(1D-myo-inositol) + H2O = 1D-myo-inositol 1-phosphate + a 1,2-diacyl-sn-glycerol + H(+). Hydrolyzes the phosphatidylinositol 4,5-bisphosphate (PIP2) to generate 2 second messenger molecules diacylglycerol (DAG) and inositol 1,4,5-trisphosphate (IP3). DAG mediates the activation of protein kinase C (PKC), while IP3 releases Ca(2+) from intracellular stores. Required for acrosome reaction in sperm during fertilization, probably by acting as an important enzyme for intracellular Ca(2+) mobilization in the zona pellucida-induced acrosome reaction. May play a role in cell growth. Modulates the liver regeneration in cooperation with nuclear PKC. Overexpression up-regulates the Erk signaling pathway and proliferation. This Macaca fascicularis (Crab-eating macaque) protein is 1-phosphatidylinositol 4,5-bisphosphate phosphodiesterase delta-4 (PLCD4).